A 131-amino-acid polypeptide reads, in one-letter code: Large ribosomal subunit protein bL17 (131 aa).

It belongs to the bacterial ribosomal protein bL17 family. As to quaternary structure, part of the 50S ribosomal subunit. Contacts protein L32.

This chain is Large ribosomal subunit protein bL17, found in Shewanella baltica (strain OS223).